The chain runs to 223 residues: Proteasome subunit beta type-1 (223 aa).

It belongs to the peptidase T1B family. As to quaternary structure, the 26S proteasome consists of a 20S proteasome core and two 19S regulatory subunits. The 20S proteasome core is composed of 28 subunits that are arranged in four stacked rings, resulting in a barrel-shaped structure. The two end rings are each formed by seven alpha subunits, and the two central rings are each formed by seven beta subunits. The catalytic chamber with the active sites is on the inside of the barrel.

The protein localises to the cytoplasm. It localises to the nucleus. Non-catalytic component of the proteasome, a multicatalytic proteinase complex which is characterized by its ability to cleave peptides with Arg, Phe, Tyr, Leu, and Glu adjacent to the leaving group at neutral or slightly basic pH. The proteasome has an ATP-dependent proteolytic activity. The chain is Proteasome subunit beta type-1 (PBF1) from Petunia hybrida (Petunia).